A 717-amino-acid polypeptide reads, in one-letter code: MLNEKKPVEQLTETEAAEELAFLVTELARHDALYHGQDAPEISDADYDALKRRNDLIEELFPALIREDSPSRKIGAAPSLTFQPVLHARPMLSLDNTFSDEDARDFVAGIYRFLGKLPDHSIAFTAEPKIDGLSMSLRYENRKLVTAATRGDGTTGENVTANIRTIRMIPQTLPADAPDVVEVRGEIYMAKSDFAALNAEMAAQGRPLYVNPRNTASGSLRQLDAKVTASRKLRFFAYAWGEISAMPSDTQFGMVETFKAWGFPVNPLMQRLSSADELLQHYHHIERERPDLDYDIDGVVYKVDRLDLQARLGFRSRSPRWATAHKFPAEQAFTRLKGIDIQVGRTGALTPVARLEPITVGGVVVTNATLHNEDYIRGIGNSGEPIREGRDIRIGDMVIVQRAGDVIPQIVDVVMDERAEGAEPYRFPTTCPVCGSHAVRDINEKTGKVDAVRRCTGGFVCRAQAIEHLKHFVSRHAFDIEGLGSKQIEFFFESEDPTLSIRTAPDIFTLERRQEASLTKLENIEGFGKVSVRKLYEAINARREIALHRFIYALGIRHVGETTAKLLARSYGTYEHFRAAMVDAGSLAGDAWNELNSIEGIGEVVARAIVEFYKEPRNLKVVSDLLEEVRPESAETRVSTDSPVAGKTVVFTGSLEKMTRDEAKAKAESLGAKVAGSVSKKTDIVVAGPGAGSKLDKARELGVQTMDEDEWLALIGG.

NAD(+)-binding positions include 44 to 48, 93 to 94, and E127; these read DADYD and SL. The N6-AMP-lysine intermediate role is filled by K129. NAD(+)-binding residues include R150, E186, K302, and K326. Residues C431, C434, C455, and C461 each coordinate Zn(2+). The 79-residue stretch at 639–717 folds into the BRCT domain; it reads STDSPVAGKT…EDEWLALIGG (79 aa).

Belongs to the NAD-dependent DNA ligase family. LigA subfamily. The cofactor is Mg(2+). Requires Mn(2+) as cofactor.

The enzyme catalyses NAD(+) + (deoxyribonucleotide)n-3'-hydroxyl + 5'-phospho-(deoxyribonucleotide)m = (deoxyribonucleotide)n+m + AMP + beta-nicotinamide D-nucleotide.. DNA ligase that catalyzes the formation of phosphodiester linkages between 5'-phosphoryl and 3'-hydroxyl groups in double-stranded DNA using NAD as a coenzyme and as the energy source for the reaction. It is essential for DNA replication and repair of damaged DNA. The sequence is that of DNA ligase from Sinorhizobium fredii (strain NBRC 101917 / NGR234).